Reading from the N-terminus, the 70-residue chain is Large ribosomal subunit protein bL28 (70 aa).

This sequence belongs to the bacterial ribosomal protein bL28 family.

This Maridesulfovibrio salexigens (strain ATCC 14822 / DSM 2638 / NCIMB 8403 / VKM B-1763) (Desulfovibrio salexigens) protein is Large ribosomal subunit protein bL28.